A 163-amino-acid polypeptide reads, in one-letter code: Urease accessory protein UreE (163 aa).

The disordered stretch occupies residues 134-163; sequence EAGAYGGGHRHHHDDDAPSIRQPARLRIHE.

It belongs to the UreE family.

Its subcellular location is the cytoplasm. Its function is as follows. Involved in urease metallocenter assembly. Binds nickel. Probably functions as a nickel donor during metallocenter assembly. This is Urease accessory protein UreE from Methylobacillus flagellatus (strain ATCC 51484 / DSM 6875 / VKM B-1610 / KT).